Consider the following 230-residue polypeptide: Ribose-5-phosphate isomerase A (230 aa).

Residues 32 to 35 (TGST), 85 to 88 (DGAD), and 98 to 101 (KGGG) contribute to the substrate site. The active-site Proton acceptor is the glutamate 107. Residue lysine 125 participates in substrate binding.

Belongs to the ribose 5-phosphate isomerase family. Homodimer.

It catalyses the reaction aldehydo-D-ribose 5-phosphate = D-ribulose 5-phosphate. The protein operates within carbohydrate degradation; pentose phosphate pathway; D-ribose 5-phosphate from D-ribulose 5-phosphate (non-oxidative stage): step 1/1. Functionally, catalyzes the reversible conversion of ribose-5-phosphate to ribulose 5-phosphate. The polypeptide is Ribose-5-phosphate isomerase A (Burkholderia ambifaria (strain ATCC BAA-244 / DSM 16087 / CCUG 44356 / LMG 19182 / AMMD) (Burkholderia cepacia (strain AMMD))).